The sequence spans 484 residues: Coronin-1B (484 aa).

Ser-2 is modified (phosphoserine). WD repeat units follow at residues Gly-80 to Pro-120, Gly-130 to Arg-170, Leu-174 to Glu-213, Ala-217 to Ala-260, and Asp-265 to His-305. The disordered stretch occupies residues Leu-404 to Gly-446. Residues Asn-410–Ala-430 show a composition bias toward polar residues. Residues Glu-444–Gly-482 are a coiled coil.

Belongs to the WD repeat coronin family. Forms homooligomers, but does not form complexes with the other coronins. Interacts with Arp2/3 complex components, including ACTR2, ARPC1B and ARPC2. Binds actin. Post-translationally, phosphorylation on Ser-2 regulates the interaction with the Arp2/3 complex and cell motility in fibroblasts. Phosphorylation does not seem to affect subcellular location. As to expression, ubiquitous.

Its subcellular location is the cytoplasm. The protein resides in the cytoskeleton. It is found in the stress fiber. Regulates leading edge dynamics and cell motility in fibroblasts. May be involved in cytokinesis and signal transduction. The sequence is that of Coronin-1B (Coro1b) from Mus musculus (Mouse).